We begin with the raw amino-acid sequence, 106 residues long: EspC protein homolog (106 aa).

This sequence belongs to the EspC family.

This Mycobacterium leprae (strain TN) protein is EspC protein homolog.